Here is a 280-residue protein sequence, read N- to C-terminus: Probable aquaporin PIP2-8 (280 aa).

A disordered region spans residues 1–21; it reads MAAGSGSGSNPKDYQDPPPAP. The next 2 helical transmembrane spans lie at 36–56 and 70–92; these read AAIA…STVI and LGIA…GISG. The short motif at 96–98 is the NPA 1 element; that stretch reads NPA. The next 3 membrane-spanning stretches (helical) occupy residues 113-135, 156-176, and 192-212; these read RAAL…ARAM, SAGA…YTVF, and VLAP…TIPI. Positions 218 to 220 match the NPA 2 motif; that stretch reads NPA. A helical membrane pass occupies residues 236-256; the sequence is AWSHLWIFWVGPFAGAAAAMI.

The protein belongs to the MIP/aquaporin (TC 1.A.8) family. PIP (TC 1.A.8.11) subfamily. As to expression, expressed in leaves and at lower levels in roots.

The protein resides in the cell membrane. In terms of biological role, aquaporins facilitate the transport of water and small neutral solutes across cell membranes. This chain is Probable aquaporin PIP2-8 (PIP2-8), found in Oryza sativa subsp. japonica (Rice).